The chain runs to 418 residues: Glutamyl-tRNA reductase (418 aa).

Residues 49-52 (TCNR), Ser109, 114-116 (EPQ), and Gln120 each bind substrate. The Nucleophile role is filled by Cys50. Residue 189–194 (GAGETI) coordinates NADP(+).

It belongs to the glutamyl-tRNA reductase family. Homodimer.

The catalysed reaction is (S)-4-amino-5-oxopentanoate + tRNA(Glu) + NADP(+) = L-glutamyl-tRNA(Glu) + NADPH + H(+). It participates in porphyrin-containing compound metabolism; protoporphyrin-IX biosynthesis; 5-aminolevulinate from L-glutamyl-tRNA(Glu): step 1/2. Functionally, catalyzes the NADPH-dependent reduction of glutamyl-tRNA(Glu) to glutamate 1-semialdehyde (GSA). The polypeptide is Glutamyl-tRNA reductase (Erwinia tasmaniensis (strain DSM 17950 / CFBP 7177 / CIP 109463 / NCPPB 4357 / Et1/99)).